We begin with the raw amino-acid sequence, 487 residues long: GTPase Der (487 aa).

EngA-type G domains are found at residues 5 to 169 (PKLA…SREI) and 178 to 351 (IKVA…ANSQ). Residues 11-18 (GRPNVGKS), 58-62 (DTGGI), 121-124 (NKID), 184-191 (GRANVGKS), 231-235 (DTAGI), and 296-299 (NKWD) contribute to the GTP site. In terms of domain architecture, KH-like spans 352 to 439 (KRITTHQLNK…IHLKGKTKKD (88 aa)). Positions 441–466 (PVSSLSLTRKQTKSTDQENNEYDELY) are disordered.

It belongs to the TRAFAC class TrmE-Era-EngA-EngB-Septin-like GTPase superfamily. EngA (Der) GTPase family. In terms of assembly, associates with the 50S ribosomal subunit.

In terms of biological role, GTPase that plays an essential role in the late steps of ribosome biogenesis. This Protochlamydia amoebophila (strain UWE25) protein is GTPase Der.